Reading from the N-terminus, the 208-residue chain is Ribosomal RNA small subunit methyltransferase G (208 aa).

S-adenosyl-L-methionine contacts are provided by residues Gly-78, Phe-83, 101-103, 129-130, and Arg-142; these read ERS and IE.

The protein belongs to the methyltransferase superfamily. RNA methyltransferase RsmG family.

It is found in the cytoplasm. Specifically methylates the N7 position of a guanine in 16S rRNA. This is Ribosomal RNA small subunit methyltransferase G from Borrelia garinii subsp. bavariensis (strain ATCC BAA-2496 / DSM 23469 / PBi) (Borreliella bavariensis).